A 553-amino-acid polypeptide reads, in one-letter code: Chaperonin GroEL 1 (553 aa).

ATP contacts are provided by residues 29 to 32, 86 to 90, G413, 476 to 478, and D492; these read TIGP, DGTTT, and NAL. Residues 520–543 form a disordered region; sequence DKPEPPAPAGGGGDPMGGMGGMDP. Residues 528-543 show a composition bias toward gly residues; it reads AGGGGDPMGGMGGMDP.

It belongs to the chaperonin (HSP60) family. In terms of assembly, forms a cylinder of 14 subunits composed of two heptameric rings stacked back-to-back. Interacts with the co-chaperonin GroES.

The protein localises to the cytoplasm. It carries out the reaction ATP + H2O + a folded polypeptide = ADP + phosphate + an unfolded polypeptide.. Its function is as follows. Together with its co-chaperonin GroES, plays an essential role in assisting protein folding. The GroEL-GroES system forms a nano-cage that allows encapsulation of the non-native substrate proteins and provides a physical environment optimized to promote and accelerate protein folding. This Synechococcus sp. (strain CC9311) protein is Chaperonin GroEL 1.